Reading from the N-terminus, the 354-residue chain is MFLRSSASRLLHGQIPCVLTRSVHSVAIVGAPFSRGQKKLGVEYGPAAIREAGLLKRLSRLGCHLKDFGDLSFTNVPQDDPYNNLVVYPRSVGLANQELAEVVSRAVSGGYSCVTMGGDHSLAIGTIIGHARHRPDLCVIWVDAHADINTPLTTVSGNIHGQPLSFLIKELQDKVPQLPGFSWIKPCLSPPNIVYIGLRDVEPPEHFILKNYDIQYFSMREIDRLGIQKVMEQTFDRLIGKRQRPIHLSFDIDAFDPKLAPATGTPVVGGLTYREGVYITEEIHNTGLLSALDLVEVNPHLATSEEEAKATARLAVDVIASSFGQTREGGHIVYDHLPTPSSPHESENEECVRI.

A mitochondrion-targeting transit peptide spans 1–22; the sequence is MFLRSSASRLLHGQIPCVLTRS. 4 residues coordinate Mn(2+): histidine 120, aspartate 143, histidine 145, and aspartate 147. Substrate-binding positions include 145–149, 156–158, and glutamate 202; these read HADIN and SGN. Mn(2+)-binding residues include aspartate 251 and aspartate 253. Substrate is bound by residues threonine 265 and glutamate 296.

Belongs to the arginase family. Homotrimer. Mn(2+) serves as cofactor.

The protein localises to the mitochondrion. The catalysed reaction is L-arginine + H2O = urea + L-ornithine. It participates in nitrogen metabolism; urea cycle; L-ornithine and urea from L-arginine: step 1/1. In terms of biological role, may play a role in the regulation of extra-urea cycle arginine metabolism and also in down-regulation of nitric oxide synthesis. Extrahepatic arginase functions to regulate L-arginine bioavailability to nitric oxid synthase (NOS). Arginine metabolism is a critical regulator of innate and adaptive immune responses. Seems to be involved in negative regulation of the survival capacity of activated CD4(+) and CD8(+) T cells. May suppress inflammation-related signaling in asthmatic airway epithelium. May contribute to the immune evasion of H.pylori by restricting M1 macrophage activation and polyamine metabolism. May play a role in promoting prenatal immune suppression. Regulates RPS6KB1 signaling, which promotes endothelial cell senescence and inflammation and implicates NOS3/eNOS dysfunction. Can inhibit endothelial autophagy independently of its enzymatic activity implicating mTORC2 signaling. Involved in vascular smooth muscle cell senescence and apoptosis independently of its enzymatic activity. This Mus musculus (Mouse) protein is Arginase-2, mitochondrial (Arg2).